Reading from the N-terminus, the 473-residue chain is Mediator of RNA polymerase II transcription subunit 29 (473 aa).

A compositionally biased stretch (polar residues) spans 1–12 (MSGQGPPSNLTP). Disordered stretches follow at residues 1–319 (MSGQ…NEEQ) and 444–473 (STMEKMRRRQKKWKDQQQQQENAEDAEMAE). Residues 13–50 (QQQHMIMQQQQQQQMMRQQQIQQQQLHQRQLQQQQAQQ) show a composition bias toward low complexity. Positions 51-62 (SYQRSRTPQMQQ) are enriched in polar residues. 2 stretches are compositionally biased toward low complexity: residues 111 to 123 (QMMQQQMGMNQPM) and 130 to 139 (VSRPGSVAPP). 2 stretches are compositionally biased toward polar residues: residues 148–183 (TGPSSNQMDQMGGQSQYSHHLQPQQPLSRPGSQQSH) and 255–269 (PPGSAQAPSSVQPGS). Composition is skewed to low complexity over residues 272-286 (APGSLQAPASQQPPA) and 294-308 (AASGSVAGPASAAPA).

Belongs to the Mediator complex subunit 29 family. As to quaternary structure, component of the Mediator complex.

It localises to the nucleus. Functionally, component of the Mediator complex, a coactivator involved in the regulated transcription of nearly all RNA polymerase II-dependent genes. Mediator functions as a bridge to convey information from gene-specific regulatory proteins to the basal RNA polymerase II transcription machinery. Mediator is recruited to promoters by direct interactions with regulatory proteins and serves as a scaffold for the assembly of a functional preinitiation complex with RNA polymerase II and the general transcription factors. The polypeptide is Mediator of RNA polymerase II transcription subunit 29 (mdt-29) (Caenorhabditis briggsae).